The sequence spans 1098 residues: Beta-alanine-activating enzyme (1098 aa).

Residues 198-206 (TSGTTGIPK), Asp-428, Arg-442, and Lys-527 each bind ATP. The 78-residue stretch at 553-630 (EDLWEKLQYL…EIYNHILQTV (78 aa)) folds into the Carrier domain. At Ser-589 the chain carries O-(pantetheine 4'-phosphoryl)serine. Phosphoserine occurs at positions 649 and 724.

This sequence belongs to the ATP-dependent AMP-binding enzyme family. In terms of tissue distribution, ubiquitously expressed in adult tissues.

Covalently binds beta-alanine in an ATP-dependent manner to form a thioester bond with its phosphopantetheine group and transfers it to an, as yet, unknown acceptor. May be required for a post-translational protein modification or for post-transcriptional modification of an RNA. The polypeptide is Beta-alanine-activating enzyme (AASDH) (Homo sapiens (Human)).